A 336-amino-acid chain; its full sequence is uncharacterized protein (336 aa).

Positions 1-23 (MKTRHLVYLAFALLGLGLAGLLE) are cleaved as a signal peptide. A run of 3 helical transmembrane segments spans residues 34–54 (LLSL…LLLG), 75–95 (VVVA…LLTT), and 106–126 (VHSL…ALGY). Residues 144–255 (VLDTSVLVDG…MARIYGVKAL (112 aa)) enclose the PINc domain. Position 222 (Asp222) interacts with Mg(2+). The TRAM domain maps to 267–328 (QLQVGDTLKL…IQTQVGRLFF (62 aa)).

Belongs to the PINc/VapC protein family. Mg(2+) is required as a cofactor.

The protein localises to the membrane. Part of a toxin-antitoxin (TA) system. An RNase. This is an uncharacterized protein from Thermus thermophilus (strain ATCC 27634 / DSM 579 / HB8).